A 270-amino-acid polypeptide reads, in one-letter code: Hemin import ATP-binding protein HmuV (270 aa).

Residues 2 to 238 (LTVENIEVTL…VTLSQAYGCT (237 aa)) form the ABC transporter domain. Residue 34–41 (GHNGSGKT) coordinates ATP.

Belongs to the ABC transporter superfamily. Heme (hemin) importer (TC 3.A.1.14.5) family. In terms of assembly, the complex is composed of two ATP-binding proteins (HmuV), two transmembrane proteins (HmuU) and a solute-binding protein (HmuT).

The protein localises to the cell inner membrane. Its function is as follows. Part of the ABC transporter complex HmuTUV involved in hemin import. Responsible for energy coupling to the transport system. In Jannaschia sp. (strain CCS1), this protein is Hemin import ATP-binding protein HmuV.